A 200-amino-acid polypeptide reads, in one-letter code: Holliday junction branch migration complex subunit RuvA (200 aa).

Residues 1–63 (MYAYIKGTLS…EDAQLLYGFI (63 aa)) are domain I. Positions 64–142 (NEEEKEMFLS…ITEENSDDLL (79 aa)) are domain II. The tract at residues 143–149 (QTQVNGN) is flexible linker. Residues 150 to 200 (EQNQIISEALLALQALGYSKRELTKVEKSLNKHNVNSVDEAVKIGLQTLVS) form a domain III region.

It belongs to the RuvA family. As to quaternary structure, homotetramer. Forms an RuvA(8)-RuvB(12)-Holliday junction (HJ) complex. HJ DNA is sandwiched between 2 RuvA tetramers; dsDNA enters through RuvA and exits via RuvB. An RuvB hexamer assembles on each DNA strand where it exits the tetramer. Each RuvB hexamer is contacted by two RuvA subunits (via domain III) on 2 adjacent RuvB subunits; this complex drives branch migration. In the full resolvosome a probable DNA-RuvA(4)-RuvB(12)-RuvC(2) complex forms which resolves the HJ.

It localises to the cytoplasm. In terms of biological role, the RuvA-RuvB-RuvC complex processes Holliday junction (HJ) DNA during genetic recombination and DNA repair, while the RuvA-RuvB complex plays an important role in the rescue of blocked DNA replication forks via replication fork reversal (RFR). RuvA specifically binds to HJ cruciform DNA, conferring on it an open structure. The RuvB hexamer acts as an ATP-dependent pump, pulling dsDNA into and through the RuvAB complex. HJ branch migration allows RuvC to scan DNA until it finds its consensus sequence, where it cleaves and resolves the cruciform DNA. This is Holliday junction branch migration complex subunit RuvA from Staphylococcus epidermidis (strain ATCC 35984 / DSM 28319 / BCRC 17069 / CCUG 31568 / BM 3577 / RP62A).